The primary structure comprises 354 residues: MGRLVALSLLGIGLALLGERFLALRSRLKASREVESVDLPNCRLIKGIETGAEDIDILPNGLAFFSVGLKFPGLHSFAPDKPGGILMMDLKEEKPRALELRVSWGFDLASFNPHGISTFIDDDDTVYLFVVNHPEFKNTVEIFKFQEEENSLLHLKTIKHELLPSVNDVIAVGPSHFYATNDHYFSDPFLKYLETYLNLRWANVVYYSPEEVKLVAEGFDSANGINISPDKKYVYVADILAHEIHVLEKQPNMNLTQLKVLQLGTLVDNLSIDPSSGDIWVGCHPNGQKLFVYDPNHPPSSEVLRIQNILSEKPSVTTVYINNGSVLQGSSVATIYDRKLLVGTLYQRALYCEL.

A disulfide bridge links Cys42 with Cys352. Positions 53 and 54 each coordinate Ca(2+). The Proton acceptor role is filled by His114. Ca(2+) contacts are provided by Ile116, Asn167, Asp168, and Asn223. N-linked (GlcNAc...) asparagine glycosylation occurs at Asn254. Ca(2+) contacts are provided by Asp268 and Asn269. Residues Asn269 and Asn323 are each glycosylated (N-linked (GlcNAc...) asparagine).

This sequence belongs to the paraoxonase family. Homotrimer. Ca(2+) is required as a cofactor. Post-translationally, glycosylated. The signal sequence is not cleaved.

It localises to the membrane. It carries out the reaction a phenyl acetate + H2O = a phenol + acetate + H(+). The catalysed reaction is an N-acyl-L-homoserine lactone + H2O = an N-acyl-L-homoserine + H(+). Capable of hydrolyzing lactones and a number of aromatic carboxylic acid esters. The protein is Serum paraoxonase/arylesterase 2 (Pon2) of Rattus norvegicus (Rat).